The following is a 1124-amino-acid chain: EGF and laminin G domain-containing protein (1124 aa).

At 1-1055 the chain is on the extracellular side; the sequence is RTFVKKYSAS…KLQAEDDDKT (1055 aa). Laminin G-like domains lie at 8–203 and 210–369; these read SASR…NQKC and PFTF…WSGC. 9 cysteine pairs are disulfide-bonded: Cys167–Cys203, Cys342–Cys369, Cys375–Cys386, Cys380–Cys395, Cys397–Cys412, Cys761–Cys788, Cys792–Cys803, Cys797–Cys812, and Cys814–Cys824. The 43-residue stretch at 371–413 folds into the EGF-like 1 domain; the sequence is ITDFCIFSPCLHGGECTQTGKTFSCGCSGTGYDKGPNSLSVCQ. The Laminin G-like 3 domain maps to 621–788; it reads NTATFVNEDG…GEAVFVKSGC (168 aa). The EGF-like 2 domain occupies 789-825; that stretch reads GAACENNSCKNHAKCLDNYNVYFCDCSKTPYYGYFCH. The tract at residues 1011 to 1047 is disordered; it reads RATCGPEPKVPEIPTPRPVGQRADVSTPQGITTNPKL. Positions 1034–1046 are enriched in polar residues; that stretch reads DVSTPQGITTNPK. Residues 1056-1076 traverse the membrane as a helical segment; it reads AIIVVVVLILVLLLVVLILVI. Residues 1077–1124 lie on the Cytoplasmic side of the membrane; the sequence is YWYWARHKGEYHTHEDDEELKATDPYIEPAAPRKLKGEEPEKKKEWYI. The interval 1090 to 1124 is disordered; the sequence is HEDDEELKATDPYIEPAAPRKLKGEEPEKKKEWYI. Residues 1111–1124 are compositionally biased toward basic and acidic residues; that stretch reads LKGEEPEKKKEWYI.

In terms of tissue distribution, component of the acid-insoluble organic matrix of the aragonitic skeleton (at protein level).

The protein resides in the membrane. This Acropora millepora (Staghorn coral) protein is EGF and laminin G domain-containing protein.